The following is a 242-amino-acid chain: MSNVSMRDMLKAGVHFGHKTRYWNPKMKQFIFGARDKVHIINLEQTVPMFNEALAFVNNVSSKKGKVLFVGTKRAASDAIKDAAIKSDQFYVNHRWLGGMLTNWKTVRQSIKRLKDLESQSTDGTFEALTKKEALMRTREMEKLDKSLGGIKNMGGLPDVLFIIDADHEHIAIKEANNLGIPVISVVDTNSNPDGVDYVVPGNDDAIRAVTLYCDAVANSVLSGREQNIVVQAEKDGFVEAE.

Belongs to the universal ribosomal protein uS2 family.

This is Small ribosomal subunit protein uS2 from Colwellia psychrerythraea (strain 34H / ATCC BAA-681) (Vibrio psychroerythus).